The following is a 288-amino-acid chain: Elongation factor Ts (288 aa).

The involved in Mg(2+) ion dislocation from EF-Tu stretch occupies residues 79 to 82 (TDFV).

It belongs to the EF-Ts family.

It localises to the cytoplasm. Its function is as follows. Associates with the EF-Tu.GDP complex and induces the exchange of GDP to GTP. It remains bound to the aminoacyl-tRNA.EF-Tu.GTP complex up to the GTP hydrolysis stage on the ribosome. The protein is Elongation factor Ts of Ehrlichia chaffeensis (strain ATCC CRL-10679 / Arkansas).